A 383-amino-acid chain; its full sequence is Chitinase-3-like protein 1 (383 aa).

The signal sequence occupies residues 1-21 (MGLRVAQTGFVVLVLLQSCAA). The GH18 domain maps to 22–383 (YKLICYYTSW…NAIKDVLAGV (362 aa)). The cysteines at positions 26 and 51 are disulfide-linked. A glycan (N-linked (GlcNAc...) asparagine) is linked at Asn-60. Residues 70-71 (EW), 97-100 (GGWN), Tyr-141, 204-207 (LTYD), and Lys-263 contribute to the chitin site. An intrachain disulfide couples Cys-300 to Cys-364. The segment at 324–338 (QWVAYDDQESVKNKA) is important for AKT1 activation and IL8 production. Trp-352 contributes to the chitin binding site.

This sequence belongs to the glycosyl hydrolase 18 family. Monomer. Detected in mammary gland.

It localises to the secreted. The protein localises to the extracellular space. Its subcellular location is the cytoplasm. The protein resides in the perinuclear region. It is found in the endoplasmic reticulum. Its function is as follows. Carbohydrate-binding lectin with a preference for chitin. Has no chitinase activity. May play a role in tissue remodeling and in the capacity of cells to respond to and cope with changes in their environment. Plays a role in T-helper cell type 2 (Th2) inflammatory response and IL-13-induced inflammation, regulating allergen sensitization, inflammatory cell apoptosis, dendritic cell accumulation and M2 macrophage differentiation. Facilitates invasion of pathogenic enteric bacteria into colonic mucosa and lymphoid organs. Mediates activation of AKT1 signaling pathway and subsequent IL8 production in colonic epithelial cells. Regulates antibacterial responses in lung by contributing to macrophage bacterial killing, controlling bacterial dissemination and augmenting host tolerance. Also regulates hyperoxia-induced injury, inflammation and epithelial apoptosis in lung. The sequence is that of Chitinase-3-like protein 1 (CHI3L1) from Bubalus bubalis (Domestic water buffalo).